The primary structure comprises 247 residues: Translation initiation factor IF-3 (247 aa).

2 disordered regions span residues 1 to 20 (MIREQRSSRGGSRDQRTNRR) and 188 to 247 (LVRQ…PTAS). Residues 182–247 (AQKARELVRQ…AAEAQSPTAS (66 aa)) are needed for vegetative and developmental functions, but not for viability. The span at 207–217 (AGKSAAGASSG) shows a compositional bias: low complexity. The span at 218 to 232 (AEEKAEETAEEKKEA) shows a compositional bias: basic and acidic residues. A compositionally biased stretch (low complexity) spans 233–247 (QAAPAAAEAQSPTAS).

It belongs to the IF-3 family. As to quaternary structure, monomer.

It localises to the cytoplasm. Its function is as follows. IF-3 binds to the 30S ribosomal subunit and shifts the equilibrium between 70S ribosomes and their 50S and 30S subunits in favor of the free subunits, thus enhancing the availability of 30S subunits on which protein synthesis initiation begins. In Myxococcus xanthus, this protein is Translation initiation factor IF-3.